We begin with the raw amino-acid sequence, 953 residues long: Lysosomal alpha-glucosidase (953 aa).

A signal peptide spans 1–27 (MNIRKPLCSNSVVGACTLISLTTAVIL). A propeptide spanning residues 28 to 69 (GHLMLRELMLLPQDLHESSSGLWKTYRPHHQEGYKPGPLHIQ) is cleaved from the precursor. The P-type domain occupies 80 to 131 (TQCDVPPSSRFDCAPDKGISQEQCEARGCCYVPAGQVLKEPQIGQPWCFFPP). 3 cysteine pairs are disulfide-bonded: C82–C109, C92–C108, and C103–C127. 3 N-linked (GlcNAc...) asparagine glycosylation sites follow: N140, N233, and N390. D404 provides a ligand contact to substrate. Residue N470 is glycosylated (N-linked (GlcNAc...) asparagine). D518 serves as the catalytic Nucleophile. E521 is an active-site residue. An intrachain disulfide couples C533 to C558. Substrate contacts are provided by R600 and D616. A disulfide bridge links C647 with C658. H674 provides a ligand contact to substrate. N-linked (GlcNAc...) asparagine glycans are attached at residues N883, N926, and N933.

It belongs to the glycosyl hydrolase 31 family.

Its subcellular location is the lysosome. The protein resides in the lysosome membrane. It carries out the reaction Hydrolysis of terminal, non-reducing (1-&gt;4)-linked alpha-D-glucose residues with release of alpha-D-glucose.. In terms of biological role, essential for the degradation of glycogen in lysosomes. Has highest activity on alpha-1,4-linked glycosidic linkages, but can also hydrolyze alpha-1,6-linked glucans. The protein is Lysosomal alpha-glucosidase (Gaa) of Mus musculus (Mouse).